Consider the following 1021-residue polypeptide: Contactin-1 (1021 aa).

The first 20 residues, 1-20 (MKTPLLVSHLLLISLTSCLG), serve as a signal peptide directing secretion. Ig-like C2-type domains are found at residues 41-131 (PIFE…ATLS), 137-223 (PFPP…KSVF), 241-326 (PADI…ARIY), 331-407 (PEWV…AELK), 413-500 (PTFE…GTLV), and 504-603 (PTRI…LVVR). 2 disulfides stabilise this stretch: C65–C114 and C158–C211. N-linked (GlcNAc...) asparagine glycosylation is found at N208 and N258. C263 and C310 are oxidised to a cystine. N338 carries an N-linked (GlcNAc...) asparagine glycan. Intrachain disulfides connect C352/C391 and C436/C484. N-linked (GlcNAc...) asparagine glycosylation is found at N457, N473, N494, and N521. C526 and C585 are oxidised to a cystine. An N-linked (GlcNAc...) asparagine glycan is attached at N593. Fibronectin type-III domains lie at 608-706 (PPGG…TDGA), 711-808 (APSD…SAQD), 813-908 (APTE…APPS), and 909-1002 (QPPR…TLSS). Positions 695 to 719 (SIPSNRIKTDGAAPNVAPSDVGGGG) are disordered. The N-linked (GlcNAc...) asparagine glycan is linked to N935. A lipid anchor (GPI-anchor amidated serine) is attached at S1001. Residues 1002 to 1021 (SGLLSLLLPSLGFLVFYSEF) constitute a propeptide, removed in mature form.

The protein belongs to the immunoglobulin superfamily. Contactin family. Monomer. Interacts with NOTCH1. Interacts with CNTNAP1 in cis form and TNR. Binds to the carbonic-anhydrase like domain of PTPRZ1. Detected in a complex with NRCAM and PTPRB. Interacts with TASOR. Expressed by neurons, oligodendrocytes and their progenitors (at protein level). Myelination regulates the expression being down-regulated when neurons are in contact with Schwann cells.

The protein localises to the cell membrane. Its function is as follows. Contactins mediate cell surface interactions during nervous system development. Involved in the formation of paranodal axo-glial junctions in myelinated peripheral nerves and in the signaling between axons and myelinating glial cells via its association with CNTNAP1. Participates in oligodendrocytes generation by acting as a ligand of NOTCH1. Its association with NOTCH1 promotes NOTCH1 activation through the released notch intracellular domain (NICD) and subsequent translocation to the nucleus. Interaction with TNR induces a repulsion of neurons and an inhibition of neurite outgrowth. The polypeptide is Contactin-1 (Cntn1) (Rattus norvegicus (Rat)).